A 211-amino-acid chain; its full sequence is Imidazole glycerol phosphate synthase subunit HisH (211 aa).

One can recognise a Glutamine amidotransferase type-1 domain in the interval 5–211; sequence SVALLDYGSG…QLLRNWVDSL (207 aa). The Nucleophile role is filled by cysteine 83. Catalysis depends on residues histidine 192 and glutamate 194.

As to quaternary structure, heterodimer of HisH and HisF.

It localises to the cytoplasm. It catalyses the reaction 5-[(5-phospho-1-deoxy-D-ribulos-1-ylimino)methylamino]-1-(5-phospho-beta-D-ribosyl)imidazole-4-carboxamide + L-glutamine = D-erythro-1-(imidazol-4-yl)glycerol 3-phosphate + 5-amino-1-(5-phospho-beta-D-ribosyl)imidazole-4-carboxamide + L-glutamate + H(+). The enzyme catalyses L-glutamine + H2O = L-glutamate + NH4(+). It functions in the pathway amino-acid biosynthesis; L-histidine biosynthesis; L-histidine from 5-phospho-alpha-D-ribose 1-diphosphate: step 5/9. In terms of biological role, IGPS catalyzes the conversion of PRFAR and glutamine to IGP, AICAR and glutamate. The HisH subunit catalyzes the hydrolysis of glutamine to glutamate and ammonia as part of the synthesis of IGP and AICAR. The resulting ammonia molecule is channeled to the active site of HisF. In Nocardia farcinica (strain IFM 10152), this protein is Imidazole glycerol phosphate synthase subunit HisH.